A 57-amino-acid polypeptide reads, in one-letter code: Protein new-glue 4 (57 aa).

The first 16 residues, 1–16 (MEWKLLLIVLPWLLVC), serve as a signal peptide directing secretion.

The protein localises to the secreted. In Drosophila melanogaster (Fruit fly), this protein is Protein new-glue 4 (ng4).